We begin with the raw amino-acid sequence, 2904 residues long: MRNPKLAIIVFLLSCVIYGPVYSQVTCRRATSREWHTQPKNISVRWTLMENTCSSLTQCWSSFAETNGHFWTTGPYHFPQLCPLELQLGDLLFVSADGTLEQHGVQLIKVSKEEFDKCAILEPRKEQLVFASSINGTLQVESKWLMSGLNYFTIINRGSSHLCRFGLRIAVLVKPQLCQSSPLLRLCSGKGECRTTLKDDSFTCRCHKHFSGRYCENVDGCYEQPCLNGGTCLSEGSAYTDLPPYTCLCPAPFTGVNCSEIIGNQNCSKWCKEGACLKVSSTSYRCECFTGYTGTYCERKRLFCDSNPCRNDGRCEETANGYVCTCPGGFTGLNCETTAEADSYCKSSGCQLDEACATDKLNATCICVDPECLEQAEVCGTLPCLNGGICVVPNGQYHCRCRQGFSGKNCEEIIDFCKLLNINCLNEGLCLNRVGGYNCLCAPGWTGEFCQYLENACLAYPNRCLNGATCISMSQTTAPPHYMCTCLPGYTGPYCEAEVNECDSSPCQHQGTCTDFVGYYKCTCPSGYTGIDCEIDINSCWLPNATCPPETLCVDLPGDQLFKCHTPCPHYLQPCANGGHCVLHNITSYSCVCAPGWTGATCLVNINECVQHRCQNRATCVDEVGGYSCLCGHGYTGVHCELDFCSGHQCSEHAVCVDQQHNYTCRCMLGYEGTLCELETDECKSAPCTNNATCIDLVAGYQCLCAPGFKGRTCSESMNECWSRPCNNGGSCIDLVNDYICNCPLGFTGHDCSMPATGCTSNPCNTKGTSMCEEQQDGFKCVCHHGYTGLFCETSINHCVEGLCHHGSECVDLTKGFMCECLPGLRGRLCEVNIDDCLDKPCGALSICKDGINAYDCFCAPGFVGNNCEIEVNECLSQPCQNGASCSDELNSFSCLCLAGTTGSLCEINIDECQSSPCMNNGTCLDLSDGFKCICPSGFSGPECSMDINECVSYPCKNGGSCIDQPGNYYCRCLAPFKGLNCELLPCEAVNPCDNGAECVEEADLVLFPLGFQCRCRKGFTGPRCEVNIDECSSNPCLNGFCYDAVDGFYCLCNPGYAGVRCEQHINDCASNMCENNSTCVDLHLSYNCLCLPGWEGEYCQRETNECLSNPCKNNATCTDLLNAYRCVCPQGWTGLDCDEDVKECSSSPCLNGAHCVESDTPGEFSCTCPPFFTGPLCEQPYDPCELQRNPCLHNSTCRAQSDGTALCVCPVGFEGTRCEIDSDDCVSRPCQNRGICVDGVNSYSCFCEPGFSGLHCEEDINECASNPCQNQAVCQDLVNGFQCSCVPGYFGPHCNLDVNECDSSPCLHESVCINKPGGFACVCSAGFSGKWCELNVDECKSNPCRNNGSCIDGLNGYQCVCSRGFMGDHCERNTDECSSGPCVHGSCLDEIDAFSCQCEVGWTGHRCQININECEAHPCLNGGSCVDLLDKYACICADGFTGKNCDIDQNVCLQTSLNFSLCFNGGTCVDGPGVNFTCSCRPGFMGDFCEVEMNECCSEPCFNGAICQDLINGYQCHCRPGWTGLHCEDDINECLLQPCNQGMCIQNEPGHGYTCFCRPGFVGENCEYNYDDCLIQSCPETFSCKDGINNVSCVPVKTDTSSLPPISVVSWRSTDISTELQPTFAPVENLQHTEQPADASFGGYSGNSFLEFGGFEVAVPISVTVRFQTESMYGTLLYSASAKRSVFFIKLYISNGILQYDFLCNQKQGVQRINTAQWVADGNEHVVIFRQCLFPCVAEVTVSGVRTVRSAPGNYTSALRLQRTDHVFIGGLPRHRSPYKEAEPFHNYTGCIEIIEINKLRRFHMDHAIARNNVDNCRSQWHHEPPTSSTHSPTLLITVETPPGEWVRVLSPTQPAPVCPQGICLNGGTCRPVSLPSGASSFFCDCPLHFTGRLCEQDITVFSPRFDGNSFLELPSLTSLFQSDTYFPSRSSEDKRILYLTMKSRTPHGSLLYCREQDLGERFLHVFLQNARAVARLGCGAAHILTAVAAQNIRIDSLVAITVRYALPSQNNGQLCFIEIAADNGTANQQQKYMDEPVSEVVFGPTFLGGFPSVLELHHNSGNVSGFIGCIRELQMGSKELYVVGEAIRGQNIQNCDAAVCQHQPCRNGGTCISDAESWFCACPSLYSGKLCQFTACERNPCARGATCVPQTQLEAACLCPYGRQGLLCDEAINITRPKFSGLDEFGYSSYVAYPSIPSTGHFYEFHLKLTFANNASALRNNLILFSGQKGQGLSGDDFFALGVRNGRIVHKYNLGSGLATIISDRLNPRINIHTVHFGRYLKTGWLKVNGQKRRTGTSPGPLMGLNTFSQLYIGGYEEYTPELLPPGSRFQNSFQGCIFDMLFRTRQDGKFHALGGPDIRPLSGRNVGQCGVNPCSLVFCHNGGTCVDSGSSVYCQCVFGWKGALCSEKVSFCDAEHIPPPFCARGSTCVPLSDGYTCQCPLGSAGLHCQQAITISDPFFSGNQSSWMSFPPINIRHRTHVQLQFQTLSPEGILFYTAQHLSTHSGDFLSISLSAGFLQLRYNLGNQTIVLQSPKELDVTGVRWHTVKAGREGNSGFLIVDGESVTRNSSEGSTTLDVGANIFIGGISSLNTVSIDAVEKELVGFTGGIREVVVNGQELELTETGALDGANVGDWDGTACGYKVCKNGGHCHPSGDFSFTCICPSLWTGSRCQQSIQCLNNLCQHNSVCIHNSTSASYSCMCSLGWTGTHCDREVTLKTIRFIGNSYLKYKDPKYNSRNLMHTEVSLNFSTSAGDGLIFWMGKAESEDDDHLAVGLQDGYLKISVNLGERTALPLVYQNSFCCNYWNYLSITHNRTLIQVYVNEERVIFEDIDPFEQYVAVNYGGVIYLGGFELNRDVASVTSGVFTKGFEGSIKDVFLYQDTKQLQFLQTCEGFNVYQGEE.

A signal peptide spans 1 to 23 (MRNPKLAIIVFLLSCVIYGPVYS). Asparagine 41 and asparagine 135 each carry an N-linked (GlcNAc...) asparagine glycan. EGF-like domains are found at residues 174 to 216 (KPQL…RYCE), 217 to 259 (NVDG…VNCS), 263 to 298 (GNQN…TYCE), and 300 to 336 (KRLF…LNCE). 6 disulfides stabilise this stretch: cysteine 178–cysteine 193, cysteine 187–cysteine 204, cysteine 206–cysteine 215, cysteine 221–cysteine 232, cysteine 226–cysteine 247, and cysteine 249–cysteine 258. 2 N-linked (GlcNAc...) asparagine glycosylation sites follow: asparagine 257 and asparagine 266. Disulfide bonds link cysteine 267–cysteine 276, cysteine 271–cysteine 286, cysteine 288–cysteine 297, cysteine 304–cysteine 315, cysteine 309–cysteine 324, and cysteine 326–cysteine 335. Asparagine 362 carries N-linked (GlcNAc...) asparagine glycosylation. 3 consecutive EGF-like domains span residues 375–411 (QAEV…KNCE), 413–451 (IIDF…EFCQ), and 453–496 (LENA…PYCE). 12 disulfides stabilise this stretch: cysteine 379–cysteine 390, cysteine 384–cysteine 399, cysteine 401–cysteine 410, cysteine 417–cysteine 430, cysteine 424–cysteine 439, cysteine 441–cysteine 450, cysteine 457–cysteine 470, cysteine 464–cysteine 484, cysteine 486–cysteine 495, cysteine 502–cysteine 513, cysteine 507–cysteine 522, and cysteine 524–cysteine 533. The EGF-like 8; calcium-binding domain occupies 498-534 (EVNECDSSPCQHQGTCTDFVGYYKCTCPSGYTGIDCE). The N-linked (GlcNAc...) asparagine glycan is linked to asparagine 544. Residues 565–603 (HTPCPHYLQPCANGGHCVLHNITSYSCVCAPGWTGATCL) form the EGF-like 9 domain. Cystine bridges form between cysteine 568–cysteine 581, cysteine 575–cysteine 591, cysteine 593–cysteine 602, cysteine 609–cysteine 620, cysteine 614–cysteine 629, cysteine 631–cysteine 640, cysteine 645–cysteine 656, cysteine 650–cysteine 665, cysteine 667–cysteine 676, cysteine 683–cysteine 694, cysteine 688–cysteine 703, cysteine 705–cysteine 714, cysteine 721–cysteine 732, cysteine 726–cysteine 741, cysteine 743–cysteine 752, cysteine 759–cysteine 772, cysteine 764–cysteine 781, cysteine 783–cysteine 792, cysteine 799–cysteine 810, cysteine 804–cysteine 819, cysteine 821–cysteine 830, cysteine 837–cysteine 848, cysteine 842–cysteine 857, cysteine 859–cysteine 868, cysteine 875–cysteine 886, cysteine 880–cysteine 895, cysteine 897–cysteine 906, cysteine 913–cysteine 924, cysteine 918–cysteine 933, cysteine 935–cysteine 944, cysteine 951–cysteine 962, cysteine 956–cysteine 971, cysteine 973–cysteine 982, cysteine 987–cysteine 999, cysteine 993–cysteine 1014, cysteine 1016–cysteine 1025, cysteine 1032–cysteine 1042, cysteine 1037–cysteine 1051, cysteine 1053–cysteine 1062, cysteine 1069–cysteine 1080, cysteine 1074–cysteine 1089, cysteine 1091–cysteine 1100, cysteine 1107–cysteine 1118, cysteine 1112–cysteine 1127, cysteine 1129–cysteine 1138, cysteine 1145–cysteine 1156, cysteine 1150–cysteine 1167, cysteine 1169–cysteine 1178, cysteine 1185–cysteine 1198, cysteine 1192–cysteine 1208, cysteine 1210–cysteine 1219, cysteine 1226–cysteine 1237, cysteine 1231–cysteine 1246, cysteine 1248–cysteine 1257, cysteine 1264–cysteine 1275, cysteine 1269–cysteine 1284, cysteine 1286–cysteine 1295, cysteine 1302–cysteine 1313, cysteine 1307–cysteine 1322, cysteine 1324–cysteine 1333, cysteine 1340–cysteine 1351, cysteine 1345–cysteine 1360, cysteine 1362–cysteine 1371, cysteine 1378–cysteine 1388, cysteine 1383–cysteine 1397, cysteine 1399–cysteine 1408, cysteine 1415–cysteine 1426, cysteine 1420–cysteine 1435, cysteine 1437–cysteine 1446, cysteine 1453–cysteine 1469, cysteine 1463–cysteine 1479, cysteine 1481–cysteine 1490, cysteine 1497–cysteine 1508, cysteine 1502–cysteine 1517, cysteine 1519–cysteine 1528, cysteine 1535–cysteine 1545, cysteine 1540–cysteine 1556, and cysteine 1558–cysteine 1567. The N-linked (GlcNAc...) asparagine glycan is linked to asparagine 585. Positions 605 to 641 (NINECVQHRCQNRATCVDEVGGYSCLCGHGYTGVHCE) constitute an EGF-like 10; calcium-binding domain. The 36-residue stretch at 642-677 (LDFCSGHQCSEHAVCVDQQHNYTCRCMLGYEGTLCE) folds into the EGF-like 11 domain. A glycan (N-linked (GlcNAc...) asparagine) is linked at asparagine 662. Positions 679-715 (ETDECKSAPCTNNATCIDLVAGYQCLCAPGFKGRTCS) constitute an EGF-like 12; calcium-binding domain. The N-linked (GlcNAc...) asparagine glycan is linked to asparagine 691. 3 consecutive EGF-like domains span residues 717-753 (SMNE…HDCS), 755-793 (PATG…LFCE), and 795-831 (SINH…RLCE). Residues 833 to 869 (NIDDCLDKPCGALSICKDGINAYDCFCAPGFVGNNCE) form the EGF-like 16; calcium-binding domain. The 37-residue stretch at 871–907 (EVNECLSQPCQNGASCSDELNSFSCLCLAGTTGSLCE) folds into the EGF-like 17; calcium-binding domain. In terms of domain architecture, EGF-like 18; calcium-binding spans 909 to 945 (NIDECQSSPCMNNGTCLDLSDGFKCICPSGFSGPECS). An N-linked (GlcNAc...) asparagine glycan is attached at asparagine 921. Residues 947–983 (DINECVSYPCKNGGSCIDQPGNYYCRCLAPFKGLNCE) form the EGF-like 19; calcium-binding domain. Residues 984 to 1026 (LLPCEAVNPCDNGAECVEEADLVLFPLGFQCRCRKGFTGPRCE) enclose the EGF-like 20 domain. The region spanning 1028-1063 (NIDECSSNPCLNGFCYDAVDGFYCLCNPGYAGVRCE) is the EGF-like 21; calcium-binding domain. The EGF-like 22 domain occupies 1065–1101 (HINDCASNMCENNSTCVDLHLSYNCLCLPGWEGEYCQ). N-linked (GlcNAc...) asparagine glycosylation is present at asparagine 1077. One can recognise an EGF-like 23; calcium-binding domain in the interval 1103–1139 (ETNECLSNPCKNNATCTDLLNAYRCVCPQGWTGLDCD). N-linked (GlcNAc...) asparagine glycosylation is present at asparagine 1115. EGF-like domains are found at residues 1141–1179 (DVKE…PLCE) and 1181–1220 (PYDP…TRCE). Asparagine 1195 carries N-linked (GlcNAc...) asparagine glycosylation. One can recognise an EGF-like 26; calcium-binding domain in the interval 1222–1258 (DSDDCVSRPCQNRGICVDGVNSYSCFCEPGFSGLHCE). Residues 1260-1296 (DINECASNPCQNQAVCQDLVNGFQCSCVPGYFGPHCN) enclose the EGF-like 27; calcium-binding domain. The EGF-like 28; calcium-binding domain occupies 1298–1334 (DVNECDSSPCLHESVCINKPGGFACVCSAGFSGKWCE). Positions 1336–1372 (NVDECKSNPCRNNGSCIDGLNGYQCVCSRGFMGDHCE) constitute an EGF-like 29; calcium-binding domain. A glycan (N-linked (GlcNAc...) asparagine) is linked at asparagine 1348. The 36-residue stretch at 1374–1409 (NTDECSSGPCVHGSCLDEIDAFSCQCEVGWTGHRCQ) folds into the EGF-like 30; calcium-binding domain. An EGF-like 31; calcium-binding domain is found at 1411-1447 (NINECEAHPCLNGGSCVDLLDKYACICADGFTGKNCD). The EGF-like 32 domain occupies 1449-1491 (DQNVCLQTSLNFSLCFNGGTCVDGPGVNFTCSCRPGFMGDFCE). Residues asparagine 1459 and asparagine 1476 are each glycosylated (N-linked (GlcNAc...) asparagine). The region spanning 1493–1529 (EMNECCSEPCFNGAICQDLINGYQCHCRPGWTGLHCE) is the EGF-like 33; calcium-binding domain. Residues 1531–1568 (DINECLLQPCNQGMCIQNEPGHGYTCFCRPGFVGENCE) form the EGF-like 34 domain. N-linked (GlcNAc...) asparagine glycans are attached at residues asparagine 1591, asparagine 1755, and asparagine 1788. The Laminin G-like 1 domain occupies 1640–1818 (ASFGGYSGNS…AIARNNVDNC (179 aa)). 4 cysteine pairs are disulfide-bonded: cysteine 1792-cysteine 1818, cysteine 1860-cysteine 1871, cysteine 1865-cysteine 1885, and cysteine 1887-cysteine 1896. One can recognise an EGF-like 35 domain in the interval 1856-1897 (PAPVCPQGICLNGGTCRPVSLPSGASSFFCDCPLHFTGRLCE). In terms of domain architecture, Laminin G-like 2 spans 1902–2102 (VFSPRFDGNS…NIQNCDAAVC (201 aa)). N-linked (GlcNAc...) asparagine glycosylation is found at asparagine 2025 and asparagine 2064. Cystine bridges form between cysteine 2071-cysteine 2102, cysteine 2102-cysteine 2113, cysteine 2107-cysteine 2122, cysteine 2124-cysteine 2133, cysteine 2138-cysteine 2149, cysteine 2143-cysteine 2159, and cysteine 2161-cysteine 2170. EGF-like domains follow at residues 2098–2134 (DAAV…KLCQ) and 2135–2171 (FTAC…LLCD). 2 N-linked (GlcNAc...) asparagine glycosylation sites follow: asparagine 2175 and asparagine 2216. The 191-residue stretch at 2182–2372 (SGLDEFGYSS…PLSGRNVGQC (191 aa)) folds into the Laminin G-like 3 domain. Disulfide bonds link cysteine 2339–cysteine 2372, cysteine 2377–cysteine 2388, cysteine 2382–cysteine 2397, cysteine 2399–cysteine 2408, cysteine 2415–cysteine 2431, cysteine 2425–cysteine 2440, and cysteine 2442–cysteine 2451. 2 consecutive EGF-like domains span residues 2373-2409 (GVNP…ALCS) and 2411-2452 (KVSF…LHCQ). The 184-residue stretch at 2459-2642 (DPFFSGNQSS…NVGDWDGTAC (184 aa)) folds into the Laminin G-like 4 domain. Residues asparagine 2465, asparagine 2528, and asparagine 2570 are each glycosylated (N-linked (GlcNAc...) asparagine). EGF-like domains lie at 2638 to 2675 (DGTA…SRCQ) and 2676 to 2714 (QSIQ…THCD). 6 disulfides stabilise this stretch: cysteine 2642–cysteine 2653, cysteine 2647–cysteine 2663, cysteine 2665–cysteine 2674, cysteine 2680–cysteine 2691, cysteine 2685–cysteine 2702, and cysteine 2704–cysteine 2713. A glycan (N-linked (GlcNAc...) asparagine) is linked at asparagine 2694. The Laminin G-like 5 domain occupies 2719-2894 (LKTIRFIGNS…TKQLQFLQTC (176 aa)). N-linked (GlcNAc...) asparagine glycans are attached at residues asparagine 2750 and asparagine 2816.

It belongs to the EYS family. Expressed in retina where it localizes between the retinal pigment epithelium and the outer nuclear layer (at protein level).

Its subcellular location is the cell projection. It is found in the cilium. It localises to the cytoplasm. The protein resides in the cytoskeleton. The protein localises to the cilium axoneme. Its subcellular location is the secreted. It is found in the extracellular space. It localises to the extracellular matrix. The protein resides in the interphotoreceptor matrix. Functionally, required to maintain the integrity of photoreceptor cells. Specifically required for normal morphology of the photoreceptor ciliary pocket, and might thus facilitate protein trafficking between the photoreceptor inner and outer segments via the transition zone. This is Protein eyes shut homolog from Danio rerio (Zebrafish).